A 1494-amino-acid chain; its full sequence is Neuropathy target esterase sws (1494 aa).

The Lumenal portion of the chain corresponds to 1 to 35 (MDVLELLRVSGSNMYYSTFLADAWCYYISNQITMT). The helical transmembrane segment at 36 to 56 (MYLYCALGVLSMLFIGWFVYF) threads the bilayer. Residues 57 to 1494 (KRLARLRLRH…NTNNETKNYL (1438 aa)) are Cytoplasmic-facing. 176–303 (IFGHFEKPIF…IRVIQVIMIR (128 aa)) serves as a coordination point for a nucleoside 3',5'-cyclic phosphate. A compositionally biased stretch (low complexity) spans 362–372 (ASGTAGSTHTA). 2 disordered regions span residues 362–405 (ASGT…ELSG) and 422–452 (NSYPPLYHQRESDGNLSTRRGSITQQEQPEV). The segment covering 435–449 (GNLSTRRGSITQQEQ) has biased composition (polar residues). Ser443 carries the phosphoserine modification. Residues 474–601 (ELGL…VVRR) and 590–717 (IVLD…LSHR) contribute to the a nucleoside 3',5'-cyclic phosphate site. The PNPLA domain occupies 944-1110 (LVLGGGGARG…VNNLPGHLWR (167 aa)). The GXGXXG signature appears at 948–953 (GGGARG). The GXSXG signature appears at 975–979 (GVSIG). The Nucleophile role is filled by Ser977. Asp1097 acts as the Proton acceptor in catalysis. Residues 1097-1099 (DGG) carry the DGA/G motif. The interval 1367-1494 (MDKATQSTPP…NTNNETKNYL (128 aa)) is disordered. The span at 1370–1381 (ATQSTPPLQSKA) shows a compositional bias: polar residues. Composition is skewed to basic and acidic residues over residues 1389-1420 (SKEEARHEWEIKREQKQELAREQELERERELS) and 1452-1483 (MDKKKTKDNDRDEVRGSAEDKGKEKEEDKENR). The span at 1484-1494 (SNTNNETKNYL) shows a compositional bias: polar residues.

The protein belongs to the NTE family. Interacts with Pka-C3; interaction inhibits the catalytic function of Pka-C3 and the esterase activity of sws.

The protein localises to the endoplasmic reticulum membrane. The catalysed reaction is a 1-acyl-sn-glycero-3-phosphocholine + H2O = sn-glycerol 3-phosphocholine + a fatty acid + H(+). Functionally, phospholipase B that deacylates intracellular phosphatidylcholine (PtdCho), generating glycerophosphocholine (GroPtdCho). This deacylation occurs at both sn-2 and sn-1 positions of PtdCho. Its specific chemical modification by certain organophosphorus (OP) compounds leads to distal axonopathy. Plays a role in the signaling mechanism between neurons and glia that regulates glia wrapping during development of the adult brain. Essential for membrane lipid homeostasis and cell survival in both neurons and glia of the adult brain. This is Neuropathy target esterase sws from Drosophila pseudoobscura pseudoobscura (Fruit fly).